The following is an 893-amino-acid chain: Exocyst complex component 4 (893 aa).

The disordered stretch occupies residues 1–27; that stretch reads MNENGATPVAAARRHRPLPAERATSNS.

It belongs to the SEC8 family. The exocyst complex is composed of sec-3/exoc1, sec-5/exoc2, sec-6/exoc3, sec-8/exoc4, sec-10/exoc5, sec-15/exoc6, exo-70/exoc7 and exo-84/exoc8. Pseudocoelom.

Component of the exocyst complex involved in the docking of exocytic vesicles with fusion sites on the plasma membrane. The sequence is that of Exocyst complex component 4 (sec-8) from Caenorhabditis elegans.